A 101-amino-acid chain; its full sequence is NADH-quinone oxidoreductase subunit K (101 aa).

Transmembrane regions (helical) follow at residues Leu-5–Leu-25, Leu-29–Gly-49, and Val-62–Val-82.

This sequence belongs to the complex I subunit 4L family. As to quaternary structure, NDH-1 is composed of 14 different subunits. Subunits NuoA, H, J, K, L, M, N constitute the membrane sector of the complex.

Its subcellular location is the cell inner membrane. It catalyses the reaction a quinone + NADH + 5 H(+)(in) = a quinol + NAD(+) + 4 H(+)(out). Functionally, NDH-1 shuttles electrons from NADH, via FMN and iron-sulfur (Fe-S) centers, to quinones in the respiratory chain. The immediate electron acceptor for the enzyme in this species is believed to be ubiquinone. Couples the redox reaction to proton translocation (for every two electrons transferred, four hydrogen ions are translocated across the cytoplasmic membrane), and thus conserves the redox energy in a proton gradient. In Syntrophotalea carbinolica (strain DSM 2380 / NBRC 103641 / GraBd1) (Pelobacter carbinolicus), this protein is NADH-quinone oxidoreductase subunit K.